The primary structure comprises 309 residues: Bombesin receptor-activated protein C6orf89 homolog (309 aa).

Topologically, residues 1-59 (MGSSLSEPCIYDKLSESIDILRQSGYRYGMSEREIEKFIKQVLETNEPRREPPQFPILR) are cytoplasmic. A helical membrane pass occupies residues 60–80 (ATVKFVVAVGVVLMAVLVFTY). The Extracellular segment spans residues 81–309 (PQSPVLMGSV…QDVQCDSAVL (229 aa)).

In terms of assembly, homodimer.

The protein localises to the golgi apparatus membrane. It is found in the cytoplasm. Functionally, exhibits histone deacetylase (HDAC) enhancer properties. May play a role in progression through the cell cycle. The sequence is that of Bombesin receptor-activated protein C6orf89 homolog from Danio rerio (Zebrafish).